Consider the following 800-residue polypeptide: DNA topoisomerase 4 subunit A (800 aa).

The Topo IIA-type catalytic domain maps to 31–496 (LPDVRDGLKP…ISEIKIDKEV (466 aa)). Tyrosine 119 (O-(5'-phospho-DNA)-tyrosine intermediate) is an active-site residue.

Belongs to the type II topoisomerase GyrA/ParC subunit family. ParC type 2 subfamily. Heterotetramer composed of ParC and ParE.

It is found in the cell membrane. It carries out the reaction ATP-dependent breakage, passage and rejoining of double-stranded DNA.. In terms of biological role, topoisomerase IV is essential for chromosome segregation. It relaxes supercoiled DNA. Performs the decatenation events required during the replication of a circular DNA molecule. This is DNA topoisomerase 4 subunit A from Staphylococcus epidermidis (strain ATCC 12228 / FDA PCI 1200).